The primary structure comprises 521 residues: MALLRLVATECRNVLQRGYSTASVPTTKMFIDGKFVESKTNDWIDLHDPATNEVVTRVPKCTQDEMQTAVESSKKAYKTWRQSSILSRQQVMLKLQHIIRNNMSELAKNITKEQGKTLIDAEGDVLRGLQVVEHCCSITSLQMGETVPNIAKDMDTYSYHLPLGVTAGIAPFNFPAMIPLWMFPVAITCGNTSIIKPSERVPGATMLLMEMLNEAGCPPGVVNVIHGAHDAVNFVCDNPDIRAVSFVGSDQAGKYIYERAGRNGKRVQCNMGAKNHGVIMADANKENTLNQLAGAAFGAAGQRCMALSTAVFVGEARNWIPDLVERARKLKVNAGHLPGTDLGPVISPQSKQRINELVESGAKEGAKIVLDGRNIKVEGFEKGNFVGPTIISDVTPNMKCYTEEIFGPVLVCLSVDTIDEAIELINNNPYGNGTAIFTTNGATARKFVNDIDVGQVGVNVPIPVPLPMFSFTGSRGSFLGDCHFYGKQGIKFYTQTKTVTQLWREGDVSHTKAAVAMPTMK.

Residues Ala170, Phe172, Lys196, Glu199, Arg200, and Ser249 each contribute to the NAD(+) site. The active-site Nucleophile is the Cys304. Glu404 is an NAD(+) binding site.

Belongs to the aldehyde dehydrogenase family. Homotetramer.

It is found in the mitochondrion. It carries out the reaction 2-methyl-3-oxopropanoate + NAD(+) + CoA + H2O = propanoyl-CoA + hydrogencarbonate + NADH + H(+). It catalyses the reaction 3-oxopropanoate + NAD(+) + CoA + H2O = hydrogencarbonate + acetyl-CoA + NADH + H(+). Functionally, probable malonate and methylmalonate semialdehyde dehydrogenase involved in the catabolism of valine, thymine, and compounds catabolized by way of beta-alanine, including uracil and cytidine. The sequence is that of Probable methylmalonate-semialdehyde/malonate-semialdehyde dehydrogenase [acylating], mitochondrial from Anopheles gambiae (African malaria mosquito).